The following is a 146-amino-acid chain: MADSTARTVKDVNPHEFVKAYSAHLKRSGKMELPEWVDIVKTARFKELPPYDPDWYYTRAASIARKIYLRQGIGVGGFQKIYGGRQRNGSRPPHFCKSSGAISRNILQQLQKMGIIDVDPKGGRLITSQGRRDLDQVAGRVDVTIA.

This sequence belongs to the eukaryotic ribosomal protein eS19 family.

In Oryza sativa subsp. japonica (Rice), this protein is Small ribosomal subunit protein eS19 (RPS19A).